A 505-amino-acid polypeptide reads, in one-letter code: uncharacterized protein (505 aa).

A disordered region spans residues M1–H52. Residues D18 to D32 show a composition bias toward polar residues. 10 consecutive transmembrane segments (helical) span residues F141–F161, A173–F193, G208–A228, L235–F255, I265–S285, S290–V310, V326–F346, G362–F382, F389–F409, and W415–V435. A phosphoserine mark is found at S463, S466, and S467.

It belongs to the SLC35F solute transporter family.

It is found in the golgi apparatus membrane. This is an uncharacterized protein from Schizosaccharomyces pombe (strain 972 / ATCC 24843) (Fission yeast).